Here is a 180-residue protein sequence, read N- to C-terminus: Large ribosomal subunit protein uL6 (180 aa).

This sequence belongs to the universal ribosomal protein uL6 family. In terms of assembly, part of the 50S ribosomal subunit.

Functionally, this protein binds to the 23S rRNA, and is important in its secondary structure. It is located near the subunit interface in the base of the L7/L12 stalk, and near the tRNA binding site of the peptidyltransferase center. This Clostridium botulinum (strain Alaska E43 / Type E3) protein is Large ribosomal subunit protein uL6.